A 477-amino-acid polypeptide reads, in one-letter code: Probable cytosolic Fe-S cluster assembly factor GL21135 (477 aa).

[4Fe-4S] cluster-binding residues include Cys23, Cys69, Cys72, Cys75, Cys188, Cys244, Cys396, and Cys400.

It belongs to the NARF family.

Component of the cytosolic iron-sulfur (Fe/S) protein assembly machinery. Required for maturation of extramitochondrial Fe/S proteins. This Drosophila persimilis (Fruit fly) protein is Probable cytosolic Fe-S cluster assembly factor GL21135.